Reading from the N-terminus, the 215-residue chain is MTQTLADMRRDYTRDGLTEAQSPDEPFALFHAWFADAVNTEQPPVEANAMTLATVDEEGRPHCRVLLLKGLDTQGFTFFTNYESAKGQQLAARPFAAMTFFWPTLERQVRIEGRVEKVSAQESDAYYQVRPLGSRLGAWASPQSRVIADRDELEGLIRQTEQRFADTRPHCPEHWGGYRLLPERIEFWQGRSSRLHDRLNYRLIDDRWTRERLAP.

Substrate contacts are provided by residues Arg-9–Tyr-12 and Lys-69. Residues Arg-64–Lys-69, Phe-79–Thr-80, Lys-86, and Gln-108 contribute to the FMN site. Tyr-126, Arg-130, and Ser-134 together coordinate substrate. FMN is bound by residues Gln-143–Ser-144 and Trp-188. Position 194–196 (Arg-194–His-196) interacts with substrate. Residue Arg-198 coordinates FMN.

This sequence belongs to the pyridoxamine 5'-phosphate oxidase family. In terms of assembly, homodimer. The cofactor is FMN.

The enzyme catalyses pyridoxamine 5'-phosphate + O2 + H2O = pyridoxal 5'-phosphate + H2O2 + NH4(+). It catalyses the reaction pyridoxine 5'-phosphate + O2 = pyridoxal 5'-phosphate + H2O2. Its pathway is cofactor metabolism; pyridoxal 5'-phosphate salvage; pyridoxal 5'-phosphate from pyridoxamine 5'-phosphate: step 1/1. It functions in the pathway cofactor metabolism; pyridoxal 5'-phosphate salvage; pyridoxal 5'-phosphate from pyridoxine 5'-phosphate: step 1/1. Catalyzes the oxidation of either pyridoxine 5'-phosphate (PNP) or pyridoxamine 5'-phosphate (PMP) into pyridoxal 5'-phosphate (PLP). This chain is Pyridoxine/pyridoxamine 5'-phosphate oxidase, found in Pseudomonas syringae pv. syringae (strain B728a).